The chain runs to 98 residues: Integration host factor subunit beta (98 aa).

This sequence belongs to the bacterial histone-like protein family. In terms of assembly, heterodimer of an alpha and a beta chain.

This protein is one of the two subunits of integration host factor, a specific DNA-binding protein that functions in genetic recombination as well as in transcriptional and translational control. The polypeptide is Integration host factor subunit beta (Hahella chejuensis (strain KCTC 2396)).